A 350-amino-acid chain; its full sequence is Vancomycin C-type resistance protein VanC2 (350 aa).

Active-site residues include E14 and S187. The ATP-grasp domain occupies H141–V343. ATP is bound at residue I171–G226. The Mg(2+) site is built by D297, E310, and N312. Residues D297, E310, and N312 each contribute to the Mn(2+) site. Residue S321 is part of the active site.

This sequence belongs to the D-alanine--D-alanine ligase family. In terms of assembly, homodimer. Requires Mg(2+) as cofactor. The cofactor is Mn(2+).

It is found in the cell membrane. It carries out the reaction D-serine + D-alanine + ATP = D-alanyl-D-serine + ADP + phosphate + H(+). It participates in cell wall biogenesis; peptidoglycan biosynthesis. Its activity is regulated as follows. Inhibited by D-cycloserine. Functionally, required for low-level resistance to the glycopeptide antibiotic vancomycin. D-alanine--D-alanine ligase of altered specificity, which catalyzes synthesis of D-Ala-D-Ser; produces a peptidoglycan which does not terminate in D-alanine but in D-serine, thus probably reducing affinity for vancomycin. Only insignificant catalytic synthesis of D-Ala-D-Ala in vitro. This chain is Vancomycin C-type resistance protein VanC2, found in Enterococcus casseliflavus (Enterococcus flavescens).